The chain runs to 81 residues: Cytochrome c6 (81 aa).

Heme c is bound by residues cysteine 10, cysteine 13, histidine 14, and methionine 54.

This sequence belongs to the cytochrome c family. PetJ subfamily. As to quaternary structure, monomer. Post-translationally, binds 1 heme c group covalently per subunit.

It is found in the cellular thylakoid lumen. Functionally, functions as an electron carrier between membrane-bound cytochrome b6-f and photosystem I in oxygenic photosynthesis. The chain is Cytochrome c6 (petJ) from Microcystis aeruginosa.